The following is a 351-amino-acid chain: Probable dual-specificity RNA methyltransferase RlmN (351 aa).

The active-site Proton acceptor is the glutamate 97. Positions tyrosine 103–aspartate 337 constitute a Radical SAM core domain. Cysteines 110 and 342 form a disulfide. Cysteine 117, cysteine 121, and cysteine 124 together coordinate [4Fe-4S] cluster. S-adenosyl-L-methionine contacts are provided by residues glycine 166–glutamate 167, serine 198, serine 221–histidine 223, and asparagine 299. Cysteine 342 functions as the S-methylcysteine intermediate in the catalytic mechanism.

The protein belongs to the radical SAM superfamily. RlmN family. It depends on [4Fe-4S] cluster as a cofactor.

It is found in the cytoplasm. It catalyses the reaction adenosine(2503) in 23S rRNA + 2 reduced [2Fe-2S]-[ferredoxin] + 2 S-adenosyl-L-methionine = 2-methyladenosine(2503) in 23S rRNA + 5'-deoxyadenosine + L-methionine + 2 oxidized [2Fe-2S]-[ferredoxin] + S-adenosyl-L-homocysteine. The enzyme catalyses adenosine(37) in tRNA + 2 reduced [2Fe-2S]-[ferredoxin] + 2 S-adenosyl-L-methionine = 2-methyladenosine(37) in tRNA + 5'-deoxyadenosine + L-methionine + 2 oxidized [2Fe-2S]-[ferredoxin] + S-adenosyl-L-homocysteine. In terms of biological role, specifically methylates position 2 of adenine 2503 in 23S rRNA and position 2 of adenine 37 in tRNAs. In Natranaerobius thermophilus (strain ATCC BAA-1301 / DSM 18059 / JW/NM-WN-LF), this protein is Probable dual-specificity RNA methyltransferase RlmN.